The sequence spans 146 residues: MNHKVLLINGPNLNLLGRREPSVYGHQTLADIVAQLNEQAQAAGVQLEHIQSNAEFELINAIHATDAQMIIINPAAFTHTSVALRDALLGVDIPFYEVHLSNVHAREPFRHHSYLSDKAIGVICGFGAQGYEFALTAAIKRLKSAT.

The Proton acceptor role is filled by Y24. Residues N73, H79, and D86 each contribute to the substrate site. The active-site Proton donor is the H99. Substrate is bound by residues 100–101 and R110; that span reads LS.

It belongs to the type-II 3-dehydroquinase family. As to quaternary structure, homododecamer.

The catalysed reaction is 3-dehydroquinate = 3-dehydroshikimate + H2O. Its pathway is metabolic intermediate biosynthesis; chorismate biosynthesis; chorismate from D-erythrose 4-phosphate and phosphoenolpyruvate: step 3/7. Catalyzes a trans-dehydration via an enolate intermediate. The polypeptide is 3-dehydroquinate dehydratase (Shewanella oneidensis (strain ATCC 700550 / JCM 31522 / CIP 106686 / LMG 19005 / NCIMB 14063 / MR-1)).